We begin with the raw amino-acid sequence, 420 residues long: UDP-N-acetylglucosamine 1-carboxyvinyltransferase (420 aa).

Residue 22–23 participates in phosphoenolpyruvate binding; sequence KN. R93 serves as a coordination point for UDP-N-acetyl-alpha-D-glucosamine. Residue C117 is the Proton donor of the active site. C117 bears the 2-(S-cysteinyl)pyruvic acid O-phosphothioketal mark. 2 residues coordinate UDP-N-acetyl-alpha-D-glucosamine: D307 and V329.

Belongs to the EPSP synthase family. MurA subfamily.

It localises to the cytoplasm. It carries out the reaction phosphoenolpyruvate + UDP-N-acetyl-alpha-D-glucosamine = UDP-N-acetyl-3-O-(1-carboxyvinyl)-alpha-D-glucosamine + phosphate. Its pathway is cell wall biogenesis; peptidoglycan biosynthesis. In terms of biological role, cell wall formation. Adds enolpyruvyl to UDP-N-acetylglucosamine. This Marinobacter nauticus (strain ATCC 700491 / DSM 11845 / VT8) (Marinobacter aquaeolei) protein is UDP-N-acetylglucosamine 1-carboxyvinyltransferase.